We begin with the raw amino-acid sequence, 380 residues long: 3-dehydroquinate synthase (380 aa).

Belongs to the archaeal-type DHQ synthase family.

It catalyses the reaction 2-amino-2,3,7-trideoxy-D-lyxo-hept-6-ulosonate + NAD(+) + H2O = 3-dehydroquinate + NH4(+) + NADH + H(+). Functionally, catalyzes the oxidative deamination and cyclization of 2-amino-3,7-dideoxy-D-threo-hept-6-ulosonic acid (ADH) to yield 3-dehydroquinate (DHQ), which is fed into the canonical shikimic pathway of aromatic amino acid biosynthesis. This chain is 3-dehydroquinate synthase, found in Methanosarcina barkeri (strain Fusaro / DSM 804).